Consider the following 107-residue polypeptide: MLKVLVVVALLVTLISYSSSEGIDDLEADELLSLMANEQTRKECIPKHHECTSNKHGCCRGNFFKYKCQCTTVVTQDGGQTERCFCGTPPHHKAAELVVGFGKKIFG.

Residues 1-20 form the signal peptide; that stretch reads MLKVLVVVALLVTLISYSSS. Positions 21–41 are excised as a propeptide; sequence EGIDDLEADELLSLMANEQTR. Cystine bridges form between cysteine 44/cysteine 59, cysteine 51/cysteine 68, cysteine 58/cysteine 86, and cysteine 70/cysteine 84.

Belongs to the neurotoxin 19 (CSTX) family. 04 (U1-Lctx) subfamily. Expressed by the venom gland.

It is found in the secreted. The chain is U1-lycotoxin-Ls1w from Lycosa singoriensis (Wolf spider).